Here is a 339-residue protein sequence, read N- to C-terminus: Dihydroorotase (339 aa).

Residues His12 and His14 each coordinate Zn(2+). Residues 14-16 (HVR) and Asn40 contribute to the substrate site. Zn(2+)-binding residues include Lys94, His133, His167, and Asp239. Lys94 carries the N6-carboxylysine modification. His133 contacts substrate. The active site involves Asp239. Positions 243 and 255 each coordinate substrate.

Belongs to the metallo-dependent hydrolases superfamily. DHOase family. Class II DHOase subfamily. In terms of assembly, homodimer. Zn(2+) serves as cofactor.

It catalyses the reaction (S)-dihydroorotate + H2O = N-carbamoyl-L-aspartate + H(+). Its pathway is pyrimidine metabolism; UMP biosynthesis via de novo pathway; (S)-dihydroorotate from bicarbonate: step 3/3. Its function is as follows. Catalyzes the reversible cyclization of carbamoyl aspartate to dihydroorotate. The protein is Dihydroorotase of Helicobacter pylori (strain P12).